A 346-amino-acid polypeptide reads, in one-letter code: 3-dehydroquinate synthase (346 aa).

NAD(+) is bound by residues 62–67 (DGEEYK), 96–100 (GVISD), 120–121 (TT), Lys-133, Lys-142, and 160–163 (FLRT). Zn(2+) is bound by residues Glu-175, His-234, and His-251.

It belongs to the sugar phosphate cyclases superfamily. Dehydroquinate synthase family. Requires Co(2+) as cofactor. Zn(2+) serves as cofactor. The cofactor is NAD(+).

Its subcellular location is the cytoplasm. It catalyses the reaction 7-phospho-2-dehydro-3-deoxy-D-arabino-heptonate = 3-dehydroquinate + phosphate. The protein operates within metabolic intermediate biosynthesis; chorismate biosynthesis; chorismate from D-erythrose 4-phosphate and phosphoenolpyruvate: step 2/7. Functionally, catalyzes the conversion of 3-deoxy-D-arabino-heptulosonate 7-phosphate (DAHP) to dehydroquinate (DHQ). The polypeptide is 3-dehydroquinate synthase (Campylobacter curvus (strain 525.92)).